The primary structure comprises 334 residues: Protein POLAR-like 1 (334 aa).

Residues 53–63 (IRTSSEDDHHR) show a composition bias toward basic and acidic residues. The disordered stretch occupies residues 53–74 (IRTSSEDDHHRVGQFSDSPPPT). A coiled-coil region spans residues 273-300 (ETRQQEEIKELEIALDDAKQRLHLKETE).

The protein resides in the cytoplasm. It is found in the cell cortex. Functionally, acts as a stomatal lineage scaffold which regulates subcellular localization and transient polarization of kinases (e.g. ASK7/BIN2 and ASK3/SK12) involved in asymmetric cell division (ACD) in a BASL-dependent manner. The chain is Protein POLAR-like 1 from Arabidopsis thaliana (Mouse-ear cress).